Reading from the N-terminus, the 170-residue chain is Protein-lysine myristoyltransferase HlyC (170 aa).

H23 is an active-site residue. H151 is a heme binding site.

The protein belongs to the RTX toxin acyltransferase family. In terms of assembly, monomer. Post-translationally, proteolytically cleaved by the protease systems ClpAP, ClpXP and FtsH, leading to its degradation.

It is found in the cytoplasm. The enzyme catalyses tetradecanoyl-[ACP] + L-lysyl-[protein] = N(6)-tetradecanoyl-L-lysyl-[protein] + holo-[ACP] + H(+). Its activity is regulated as follows. The acyltransferase activity is inhibited by heme. In terms of biological role, protein-lysine myristoyltransferase that catalyzes myristoylation of the protoxin (HlyA) at two internal lysine residues, thereby converting it to the active toxin. The chain is Protein-lysine myristoyltransferase HlyC from Escherichia coli.